Consider the following 1477-residue polypeptide: FHA domain-containing protein PS1 (1477 aa).

The region spanning 64-115 (LVVGRHPDCDILLTHPSISRFHLEIRSISSRQKLFVTDLSSVHGTWVRDLRI) is the FHA domain. 7 disordered regions span residues 188–218 (ENTT…DEDT), 588–644 (LGKA…PKSF), 789–818 (PNSF…DSEF), 832–911 (LNQK…LIGS), 942–979 (ALAA…RDDV), 1004–1030 (IRTN…KQAL), and 1159–1225 (VEQE…IRSS). Over residues 589–607 (GKADIRSHEENGESEDSRQ) the composition is skewed to basic and acidic residues. Residues 832–849 (LNQKRNGETKVSSRQASP) show a composition bias toward polar residues. Residues 870 to 883 (QSLCSSSQPPSESE) show a composition bias toward low complexity. Polar residues-rich tracts occupy residues 885–897 (NPAT…SGII), 957–971 (LSSS…QTPE), 1007–1018 (NKSQGKQKQTGR), and 1198–1212 (SSFQ…SSTA). The segment covering 1213–1225 (SARNNISRGIRSS) has biased composition (low complexity).

Its function is as follows. Required for normal spindle orientation at male meiosis II and normal formation of tetrad of microspores. Not involved in female meiosis. The protein is FHA domain-containing protein PS1 of Arabidopsis thaliana (Mouse-ear cress).